Consider the following 100-residue polypeptide: Small ribosomal subunit protein uS14c (100 aa).

It belongs to the universal ribosomal protein uS14 family. As to quaternary structure, part of the 30S ribosomal subunit.

The protein localises to the plastid. Its subcellular location is the chloroplast. In terms of biological role, binds 16S rRNA, required for the assembly of 30S particles. The sequence is that of Small ribosomal subunit protein uS14c from Chlorella vulgaris (Green alga).